The primary structure comprises 436 residues: Ribosomal protein uS12 methylthiotransferase RimO (436 aa).

The region spanning 2-117 (RNVGIISLGC…IVDVIEEVKK (116 aa)) is the MTTase N-terminal domain. The [4Fe-4S] cluster site is built by C11, C47, C80, C154, C158, and C161. Residues 140–369 (TTPPYYAYLK…MEIQKQISYE (230 aa)) enclose the Radical SAM core domain. The 65-residue stretch at 372 to 436 (MSKIGTKLEV…AFEYDLVGEY (65 aa)) folds into the TRAM domain.

Belongs to the methylthiotransferase family. RimO subfamily. The cofactor is [4Fe-4S] cluster.

Its subcellular location is the cytoplasm. The enzyme catalyses L-aspartate(89)-[ribosomal protein uS12]-hydrogen + (sulfur carrier)-SH + AH2 + 2 S-adenosyl-L-methionine = 3-methylsulfanyl-L-aspartate(89)-[ribosomal protein uS12]-hydrogen + (sulfur carrier)-H + 5'-deoxyadenosine + L-methionine + A + S-adenosyl-L-homocysteine + 2 H(+). Its function is as follows. Catalyzes the methylthiolation of an aspartic acid residue of ribosomal protein uS12. This chain is Ribosomal protein uS12 methylthiotransferase RimO, found in Caldanaerobacter subterraneus subsp. tengcongensis (strain DSM 15242 / JCM 11007 / NBRC 100824 / MB4) (Thermoanaerobacter tengcongensis).